The following is a 783-amino-acid chain: Probable phosphoketolase (783 aa).

The protein belongs to the XFP family. Thiamine diphosphate serves as cofactor.

The polypeptide is Probable phosphoketolase (Rhodopseudomonas palustris (strain TIE-1)).